The sequence spans 355 residues: MVLCKLLTPYFLLSILSVGVFTATAAPSPSIQMTENTNQDHHEHAKRGGTCAFPNYDGMVAVQKGGSNGGWAMSPDQECSYGSWCPYACKPGQLMGQWDPSATTYSYPKCQNGGLYCDSNGNLQKPNSDKDYCYDGKGTVIAKNNANSGDVAFCQTVLPGNEAMLIPTLVGSGSKQTLAVPGTDYWASSASHYYVNAPGVSVEDACQWGSSANPQGNWAPFVAGSNMDDNQNTFVKIGWNPVYLESSCPFKNVKPSFGIRITCDDESQCEGLPCSIDPSSNGVNEVTSSGGGSSGAGGGNFCVVTARNGAKANIEVFDVGSGSSSKGKRELNPLDVITTTVTETKYKTVTVTAKT.

The chain crosses the membrane as a helical span at residues L6–A26.

Belongs to the SUN family.

It is found in the membrane. This is an uncharacterized protein from Saccharomyces cerevisiae (strain ATCC 204508 / S288c) (Baker's yeast).